The primary structure comprises 72 residues: Large ribosomal subunit protein uL30 (72 aa).

This sequence belongs to the universal ribosomal protein uL30 family. Part of the 50S ribosomal subunit.

This Mycobacterium ulcerans (strain Agy99) protein is Large ribosomal subunit protein uL30.